The following is a 364-amino-acid chain: MSLAGGRAPRKTAGNRLSGLLEAEEEDEFYQTTYGGFTEESGDDEYQGDQSDTEDEVDSDFDIDEGDEPSSDGEAEEPRRKRRVVTKAYKEPLKSLRPRKVNTPAGSSQKAREEKALLPLELQDDGSDSRKSMRQSTAEHTRQTFLRVQERQGQSRRRKGPHCERPLTQEELLREAKITEELNLRSLETYERLEADKKKQVHKKRKCPGPIITYHSVTVPLVGEPGPKEENVDIEGLDPAPSVSALTPHAGTGPVNPPARCSRTFITFSDDATFEEWFPQGRPPKVPVREVCPVTHRPALYRDPVTDIPYATARAFKIIREAYKKYITAHGLPPTASALGPGPPPPEPLPGSGPRALRQKIVIK.

Disordered stretches follow at residues 1-165 and 335-357; these read MSLA…HCER and TASALGPGPPPPEPLPGSGPRAL. The span at 40 to 75 shows a compositional bias: acidic residues; the sequence is ESGDDEYQGDQSDTEDEVDSDFDIDEGDEPSSDGEA. A Glycyl lysine isopeptide (Lys-Gly) (interchain with G-Cter in SUMO2) cross-link involves residue Lys115. Residues Ser127 and Ser129 each carry the phosphoserine modification. Over residues 127-142 the composition is skewed to basic and acidic residues; the sequence is SDSRKSMRQSTAEHTR. A DNA-binding region spans residues 156–206; sequence RRRKGPHCERPLTQEELLREAKITEELNLRSLETYERLEADKKKQVHKKRK. Residues 341-351 are compositionally biased toward pro residues; that stretch reads PGPPPPEPLPG.

This sequence belongs to the VPS72/YL1 family. Component of the NuA4 histone acetyltransferase complex which contains the catalytic subunit KAT5/TIP60 and the subunits EP400, TRRAP/PAF400, BRD8/SMAP, EPC1, DMAP1/DNMAP1, RUVBL1/TIP49, RUVBL2, ING3, actin, ACTL6A/BAF53A, MORF4L1/MRG15, MORF4L2/MRGX, MRGBP, YEATS4/GAS41 and VPS72/YL1. Component of a NuA4-related complex which contains EP400, TRRAP/PAF400, SRCAP, BRD8/SMAP, EPC1, DMAP1/DNMAP1, RUVBL1/TIP49, RUVBL2, actin, ACTL6A/BAF53A, VPS72 and YEATS4/GAS41. Also part of a multiprotein complex which contains SRCAP and which binds to H2AZ1/H2AZ. Interacts (via N-terminal domain) with heterodimer H2BC11 and H2AZ1. The interaction with H2AZ1 is enhanced by VPS72 phosphorylation which is promoted by ZNHIT1. In terms of processing, phosphorylation is enhanced by ZNHIT1 and promotes the interaction of VPS72 with histone H2AZ1.

The protein localises to the nucleus. Its function is as follows. Deposition-and-exchange histone chaperone specific for H2AZ1, specifically chaperones H2AZ1 and deposits it into nucleosomes. As component of the SRCAP complex, mediates the ATP-dependent exchange of histone H2AZ1/H2B dimers for nucleosomal H2A/H2B, leading to transcriptional regulation of selected genes by chromatin remodeling. The protein is Vacuolar protein sorting-associated protein 72 homolog (VPS72) of Homo sapiens (Human).